We begin with the raw amino-acid sequence, 158 residues long: 2-C-methyl-D-erythritol 2,4-cyclodiphosphate synthase (158 aa).

Residues aspartate 9 and histidine 11 each coordinate a divalent metal cation. 4-CDP-2-C-methyl-D-erythritol 2-phosphate is bound by residues 9–11 (DVH) and 35–36 (HS). Histidine 43 provides a ligand contact to a divalent metal cation. 4-CDP-2-C-methyl-D-erythritol 2-phosphate is bound by residues 57-59 (DIG), 62-66 (FPDTD), 133-136 (TTTE), phenylalanine 140, and arginine 143.

Belongs to the IspF family. Homotrimer. Requires a divalent metal cation as cofactor.

It catalyses the reaction 4-CDP-2-C-methyl-D-erythritol 2-phosphate = 2-C-methyl-D-erythritol 2,4-cyclic diphosphate + CMP. It participates in isoprenoid biosynthesis; isopentenyl diphosphate biosynthesis via DXP pathway; isopentenyl diphosphate from 1-deoxy-D-xylulose 5-phosphate: step 4/6. Its function is as follows. Involved in the biosynthesis of isopentenyl diphosphate (IPP) and dimethylallyl diphosphate (DMAPP), two major building blocks of isoprenoid compounds. Catalyzes the conversion of 4-diphosphocytidyl-2-C-methyl-D-erythritol 2-phosphate (CDP-ME2P) to 2-C-methyl-D-erythritol 2,4-cyclodiphosphate (ME-CPP) with a corresponding release of cytidine 5-monophosphate (CMP). The chain is 2-C-methyl-D-erythritol 2,4-cyclodiphosphate synthase from Haemophilus influenzae (strain PittEE).